The sequence spans 503 residues: ATP synthase subunit alpha (503 aa).

169–176 (GDRKTGKT) serves as a coordination point for ATP.

It belongs to the ATPase alpha/beta chains family. In terms of assembly, F-type ATPases have 2 components, CF(1) - the catalytic core - and CF(0) - the membrane proton channel. CF(1) has five subunits: alpha(3), beta(3), gamma(1), delta(1), epsilon(1). CF(0) has three main subunits: a(1), b(2) and c(9-12). The alpha and beta chains form an alternating ring which encloses part of the gamma chain. CF(1) is attached to CF(0) by a central stalk formed by the gamma and epsilon chains, while a peripheral stalk is formed by the delta and b chains.

It localises to the cell membrane. The catalysed reaction is ATP + H2O + 4 H(+)(in) = ADP + phosphate + 5 H(+)(out). Produces ATP from ADP in the presence of a proton gradient across the membrane. The alpha chain is a regulatory subunit. This Ligilactobacillus salivarius (strain UCC118) (Lactobacillus salivarius) protein is ATP synthase subunit alpha.